The sequence spans 305 residues: tRNA pseudouridine synthase B (305 aa).

Catalysis depends on aspartate 39, which acts as the Nucleophile. In terms of domain architecture, PUA spans 237–305 (LPVIIVPGEF…FLLKPHKVLK (69 aa)).

Belongs to the pseudouridine synthase TruB family. Type 1 subfamily.

The catalysed reaction is uridine(55) in tRNA = pseudouridine(55) in tRNA. Its function is as follows. Responsible for synthesis of pseudouridine from uracil-55 in the psi GC loop of transfer RNAs. The chain is tRNA pseudouridine synthase B from Moorella thermoacetica (strain ATCC 39073 / JCM 9320).